Here is a 487-residue protein sequence, read N- to C-terminus: Glutamyl-tRNA(Gln) amidotransferase subunit A (487 aa).

Active-site charge relay system residues include Lys-78 and Ser-153. Catalysis depends on Ser-177, which acts as the Acyl-ester intermediate.

It belongs to the amidase family. GatA subfamily. Heterotrimer of A, B and C subunits.

It carries out the reaction L-glutamyl-tRNA(Gln) + L-glutamine + ATP + H2O = L-glutaminyl-tRNA(Gln) + L-glutamate + ADP + phosphate + H(+). Its function is as follows. Allows the formation of correctly charged Gln-tRNA(Gln) through the transamidation of misacylated Glu-tRNA(Gln) in organisms which lack glutaminyl-tRNA synthetase. The reaction takes place in the presence of glutamine and ATP through an activated gamma-phospho-Glu-tRNA(Gln). This is Glutamyl-tRNA(Gln) amidotransferase subunit A from Oenococcus oeni (strain ATCC BAA-331 / PSU-1).